The chain runs to 30 residues: Cliotide T6 (30 aa).

Positions 1–30 form a cross-link, cyclopeptide (Ser-Asn); the sequence is SIPCGESCVYIPCITTIVGCSCKDKVCYKN. 3 cysteine pairs are disulfide-bonded: C4-C20, C8-C22, and C13-C27.

Contains 3 disulfide bonds. In terms of processing, this is a cyclic peptide. Expressed in pod but not in flower, stem, shoot, leaf, seed, root and nodule (at protein level).

Functionally, probably participates in a plant defense mechanism. The polypeptide is Cliotide T6 (Clitoria ternatea (Butterfly pea)).